Reading from the N-terminus, the 629-residue chain is tRNA uridine 5-carboxymethylaminomethyl modification enzyme MnmG (629 aa).

FAD contacts are provided by residues 13–18, valine 125, and serine 180; that span reads GGGHAG. An NAD(+)-binding site is contributed by 273–287; sequence GPRYCPSIEDKVMRF. FAD is bound at residue glutamine 370.

This sequence belongs to the MnmG family. Homodimer. Heterotetramer of two MnmE and two MnmG subunits. The cofactor is FAD.

It localises to the cytoplasm. NAD-binding protein involved in the addition of a carboxymethylaminomethyl (cmnm) group at the wobble position (U34) of certain tRNAs, forming tRNA-cmnm(5)s(2)U34. The sequence is that of tRNA uridine 5-carboxymethylaminomethyl modification enzyme MnmG from Salmonella paratyphi C (strain RKS4594).